A 553-amino-acid chain; its full sequence is Major facilitator-type transporter hxnZ (553 aa).

Transmembrane regions (helical) follow at residues 89-109 (FTVA…ISAV), 128-148 (VAYY…SDLI), 152-172 (PAFN…AGTS), 174-194 (FIAF…NVVC), and 213-233 (ALSG…WVFL). Asparagine 235 carries an N-linked (GlcNAc...) asparagine glycan. 7 helical membrane passes run 257–277 (YTLI…IFVF), 366–386 (ALIW…FNFL), 409–429 (IQSA…NTFL), 433–453 (WMMG…VGVK), 459–481 (LAFS…YAIM), 496–516 (TASG…SLIA), and 525–545 (PIYA…GLPF).

This sequence belongs to the major facilitator superfamily.

It localises to the cell membrane. Major facilitator-type transporter, part of the hnx cluster involved in the purine degradation. The nicotinate hydroxylase hnxS accepts nicotinate as a substrate and catalyzes the first step of nicotinate catabolism. The major facilitator-type transporters hxnP and hxnZ are probably involved in the uptake of nicotinate-derived metabolites, and the oxidoreductases hxnT and hxnY in the further metabolism of 6-OH nicotinic acid. This is Major facilitator-type transporter hxnZ from Emericella nidulans (strain FGSC A4 / ATCC 38163 / CBS 112.46 / NRRL 194 / M139) (Aspergillus nidulans).